A 282-amino-acid chain; its full sequence is UPF0294 protein VIBHAR_03217 (282 aa).

It belongs to the UPF0294 family.

It is found in the cytoplasm. This chain is UPF0294 protein VIBHAR_03217, found in Vibrio campbellii (strain ATCC BAA-1116).